Reading from the N-terminus, the 57-residue chain is MFYFRDFNMVVKQEEGSTLFFNMYKYILKKLKRFSLYIFNIIKYVIIFVVYLINKSF.

The protein localises to the plastid. This is an uncharacterized protein from Euglena longa (Euglenophycean alga).